The following is a 134-amino-acid chain: Methylglyoxal synthase (134 aa).

The 134-residue stretch at 1–134 folds into the MGS-like domain; the sequence is MNIALIAHDN…DWRERVKERG (134 aa). Substrate-binding positions include His-8, Lys-12, 34–37, and 54–55; these read TGTT and SG. The Proton donor/acceptor role is filled by Asp-60. His-87 is a substrate binding site.

Belongs to the methylglyoxal synthase family.

The catalysed reaction is dihydroxyacetone phosphate = methylglyoxal + phosphate. Functionally, catalyzes the formation of methylglyoxal from dihydroxyacetone phosphate. This is Methylglyoxal synthase from Alkaliphilus metalliredigens (strain QYMF).